A 396-amino-acid chain; its full sequence is S-adenosylmethionine synthase (396 aa).

His16 contributes to the ATP binding site. Asp18 provides a ligand contact to Mg(2+). Glu44 provides a ligand contact to K(+). Glu57 and Gln100 together coordinate L-methionine. Residues 100–110 (QSPDINQGVDR) form a flexible loop region. Residues 165–167 (DAK), Asp240, 246–247 (RK), Ala263, and Lys267 each bind ATP. L-methionine is bound at residue Asp240. Residue Lys271 coordinates L-methionine.

The protein belongs to the AdoMet synthase family. Homotetramer; dimer of dimers. Requires Mg(2+) as cofactor. K(+) serves as cofactor.

It localises to the cytoplasm. It catalyses the reaction L-methionine + ATP + H2O = S-adenosyl-L-methionine + phosphate + diphosphate. Its pathway is amino-acid biosynthesis; S-adenosyl-L-methionine biosynthesis; S-adenosyl-L-methionine from L-methionine: step 1/1. Its function is as follows. Catalyzes the formation of S-adenosylmethionine (AdoMet) from methionine and ATP. The overall synthetic reaction is composed of two sequential steps, AdoMet formation and the subsequent tripolyphosphate hydrolysis which occurs prior to release of AdoMet from the enzyme. This chain is S-adenosylmethionine synthase, found in Pseudomonas fluorescens (strain ATCC BAA-477 / NRRL B-23932 / Pf-5).